The sequence spans 425 residues: Protein UL117 (425 aa).

Residues 59–83 (PTTTSSSLAPPRDDERRPTPPLRPP) are disordered.

This sequence belongs to the herpesviridae U84 family.

Its subcellular location is the host nucleus. Functionally, plays a role in the inhibition of host DNA replication in the infected cell. Targets the mini-chromosome maintenance (MCM) complex and blocks the accumulation of MCM proteins and their loading onto host chromatin. In Homo sapiens (Human), this protein is Protein UL117 (UL117).